A 395-amino-acid chain; its full sequence is S-adenosylmethionine synthase (395 aa).

An ATP-binding site is contributed by His-15. Mg(2+) is bound at residue Asp-17. A K(+)-binding site is contributed by Glu-43. Positions 56 and 99 each coordinate L-methionine. Residues 99-109 form a flexible loop region; sequence QSPDIAMGVDE. Residues 173-175, 239-240, Asp-248, 254-255, Ala-271, and Lys-275 each bind ATP; these read DGK, RF, and RK. Residue Asp-248 participates in L-methionine binding. Lys-279 contributes to the L-methionine binding site.

Belongs to the AdoMet synthase family. In terms of assembly, homotetramer; dimer of dimers. It depends on Mg(2+) as a cofactor. K(+) is required as a cofactor.

The protein localises to the cytoplasm. The catalysed reaction is L-methionine + ATP + H2O = S-adenosyl-L-methionine + phosphate + diphosphate. Its pathway is amino-acid biosynthesis; S-adenosyl-L-methionine biosynthesis; S-adenosyl-L-methionine from L-methionine: step 1/1. Its function is as follows. Catalyzes the formation of S-adenosylmethionine (AdoMet) from methionine and ATP. The overall synthetic reaction is composed of two sequential steps, AdoMet formation and the subsequent tripolyphosphate hydrolysis which occurs prior to release of AdoMet from the enzyme. This chain is S-adenosylmethionine synthase, found in Desulforudis audaxviator (strain MP104C).